The chain runs to 698 residues: Elongation factor G (698 aa).

Residues 8-290 (ERYRNIGISA…AVIELLPSPT (283 aa)) form the tr-type G domain. GTP contacts are provided by residues 17-24 (AHIDAGKT), 88-92 (DTPGH), and 142-145 (NKMD).

The protein belongs to the TRAFAC class translation factor GTPase superfamily. Classic translation factor GTPase family. EF-G/EF-2 subfamily.

Its subcellular location is the cytoplasm. Catalyzes the GTP-dependent ribosomal translocation step during translation elongation. During this step, the ribosome changes from the pre-translocational (PRE) to the post-translocational (POST) state as the newly formed A-site-bound peptidyl-tRNA and P-site-bound deacylated tRNA move to the P and E sites, respectively. Catalyzes the coordinated movement of the two tRNA molecules, the mRNA and conformational changes in the ribosome. In Chromobacterium violaceum (strain ATCC 12472 / DSM 30191 / JCM 1249 / CCUG 213 / NBRC 12614 / NCIMB 9131 / NCTC 9757 / MK), this protein is Elongation factor G.